The primary structure comprises 211 residues: Uracil phosphoribosyltransferase (211 aa).

5-phospho-alpha-D-ribose 1-diphosphate is bound by residues Arg77, Arg102, and 129–137 (DPMLATGGS). Uracil contacts are provided by residues Ile192 and 197–199 (GDA). Position 198 (Asp198) interacts with 5-phospho-alpha-D-ribose 1-diphosphate.

It belongs to the UPRTase family. It depends on Mg(2+) as a cofactor.

It carries out the reaction UMP + diphosphate = 5-phospho-alpha-D-ribose 1-diphosphate + uracil. Its pathway is pyrimidine metabolism; UMP biosynthesis via salvage pathway; UMP from uracil: step 1/1. With respect to regulation, allosterically activated by GTP. Functionally, catalyzes the conversion of uracil and 5-phospho-alpha-D-ribose 1-diphosphate (PRPP) to UMP and diphosphate. The chain is Uracil phosphoribosyltransferase from Corynebacterium diphtheriae (strain ATCC 700971 / NCTC 13129 / Biotype gravis).